The sequence spans 272 residues: HTH-type transcriptional repressor AllR (272 aa).

The interval 1-20 (MTEVRRRGRPGQAEPTAQKG) is disordered. The region spanning 21–83 (AQALERGIAI…SQLGWWHIGL (63 aa)) is the HTH iclR-type domain. The H-T-H motif DNA-binding region spans 43-62 (VSDISGSLDLPLSTTFRLLK). Residues 98–267 (VLSVAGPFMH…AKDISTALGL (170 aa)) form the IclR-ED domain. Glyoxylate is bound by residues 154–156 (SGA), Asp-207, Cys-217, and 234–236 (SIS).

Negative regulator of allantoin and glyoxylate utilization operons. Binds to the gcl promoter and to the allS-allA intergenic region. This chain is HTH-type transcriptional repressor AllR (allR), found in Salmonella paratyphi A (strain ATCC 9150 / SARB42).